A 392-amino-acid chain; its full sequence is Galactokinase (392 aa).

The alpha-D-galactose site is built by arginine 37, glutamate 43, histidine 44, and aspartate 46. ATP contacts are provided by glycine 136, glycine 138, serine 140, and serine 141. Residue aspartate 186 coordinates alpha-D-galactose. Catalysis depends on aspartate 186, which acts as the Proton acceptor. Residue serine 230 is modified to Phosphoserine. Tyrosine 236 serves as a coordination point for alpha-D-galactose.

Belongs to the GHMP kinase family. GalK subfamily. In terms of assembly, homodimer.

It catalyses the reaction alpha-D-galactose + ATP = alpha-D-galactose 1-phosphate + ADP + H(+). It participates in carbohydrate metabolism; galactose metabolism. Catalyzes the transfer of a phosphate from ATP to alpha-D-galactose and participates in the first committed step in the catabolism of galactose. This chain is Galactokinase (GALK1), found in Bos taurus (Bovine).